A 134-amino-acid polypeptide reads, in one-letter code: ATP synthase epsilon chain (134 aa).

The protein belongs to the ATPase epsilon chain family. F-type ATPases have 2 components, CF(1) - the catalytic core - and CF(0) - the membrane proton channel. CF(1) has five subunits: alpha(3), beta(3), gamma(1), delta(1), epsilon(1). CF(0) has three main subunits: a, b and c.

The protein localises to the cell membrane. Functionally, produces ATP from ADP in the presence of a proton gradient across the membrane. This is ATP synthase epsilon chain from Anoxybacillus flavithermus (strain DSM 21510 / WK1).